The primary structure comprises 30 residues: Varv peptide B (30 aa).

The cyclopeptide (Gly-Asn) cross-link spans 1–30 (GLPVCGETCFGGTCNTPGCSCDPWPMCSRN). 3 cysteine pairs are disulfide-bonded: Cys5/Cys19, Cys9/Cys21, and Cys14/Cys27.

In terms of processing, this is a cyclic peptide.

Its function is as follows. Probably participates in a plant defense mechanism. This is Varv peptide B from Viola arvensis (European field pansy).